We begin with the raw amino-acid sequence, 640 residues long: Phosphatidylinositol-binding clathrin assembly protein (640 aa).

An N-acetylserine modification is found at S2. Residues 14–145 form the ENTH domain; that stretch reads QHSVTGSAVS…VSYRQVAFDF (132 aa). S16 and S20 each carry phosphoserine. Residues 221–294 are interaction with PIMREG; that stretch reads KYFDMKKNQC…LEGKKIKDST (74 aa). K238 participates in a covalent cross-link: Glycyl lysine isopeptide (Lys-Gly) (interchain with G-Cter in SUMO2). Phosphoserine occurs at positions 303 and 315. The segment at 543 to 568 is disordered; it reads NGTTKNDVSCSQPGEKKLTGGSNWQP. A compositionally biased stretch (polar residues) spans 544–554; sequence GTTKNDVSCSQ.

Belongs to the PICALM/SNAP91 family. In terms of assembly, binds to clathrin; involves primarily the C-terminal sequences, but the full-length protein is required for full binding capacity. Binds phosphatidylinositol 4,5- bisphosphate. Interacts with PIMREG; this interaction may change the subcellular location into the nucleus. Interacts with AP2A1 (via its alpha-appendage domain). Interacts (via N-terminus) with VAMP2; VAMP3; VAMP7 and VAMP8 (Via N-terminus). Interacts with LC3/MAP1LC3A. Isoform 2 was found in most tissues examined. Isoform 1 has an overlapping expression pattern but is absent from lung, heart and pancreas. Both isoforms are widely expressed in the brain, higher levels are seen in hippocampus, dentate gyrus, medial habenula nucleus and cerebellar granule cells.

It is found in the cell membrane. Its subcellular location is the membrane. It localises to the clathrin-coated pit. The protein resides in the golgi apparatus. The protein localises to the cytoplasmic vesicle. It is found in the clathrin-coated vesicle. Its subcellular location is the nucleus. In terms of biological role, cytoplasmic adapter protein that plays a critical role in clathrin-mediated endocytosis which is important in processes such as internalization of cell receptors, synaptic transmission or removal of apoptotic cells. Recruits AP-2 and attaches clathrin triskelions to the cytoplasmic side of plasma membrane leading to clathrin-coated vesicles (CCVs) assembly. Furthermore, regulates clathrin-coated vesicle size and maturation by directly sensing and driving membrane curvature. In addition to binding to clathrin, mediates the endocytosis of small R-SNARES (Soluble NSF Attachment Protein REceptors) between plasma membranes and endosomes including VAMP2, VAMP3, VAMP4, VAMP7 or VAMP8. In turn, PICALM-dependent SNARE endocytosis is required for the formation and maturation of autophagic precursors. Modulates thereby autophagy and the turnover of autophagy substrates such as MAPT/TAU or amyloid precursor protein cleaved C-terminal fragment (APP-CTF). In Rattus norvegicus (Rat), this protein is Phosphatidylinositol-binding clathrin assembly protein (Picalm).